An 846-amino-acid chain; its full sequence is Inactive cap-specific mRNA (nucleoside-2'-O-)-methyltransferase 1B (846 aa).

Residues 30 to 50 (DDEDDFVDDPSPTEQKTKAEK) form a disordered region. The region spanning 44–90 (QKTKAEKKMERMGYKAGEGLGKNKQGIQEPIAISFREGKAGLGHEQW) is the G-patch domain. Residues 184-413 (FFLNRSAMKT…ERFVVCKGLR (230 aa)) enclose the RrmJ-type SAM-dependent 2'-O-MTase domain.

The chain is Inactive cap-specific mRNA (nucleoside-2'-O-)-methyltransferase 1B from Caenorhabditis briggsae.